Here is a 201-residue protein sequence, read N- to C-terminus: Putative ankyrin repeat protein R868 (201 aa).

2 ANK repeats span residues 125-154 and 156-188; these read YENN…NCYF and KAKK…DYNF.

The polypeptide is Putative ankyrin repeat protein R868 (Acanthamoeba polyphaga (Amoeba)).